The following is a 132-amino-acid chain: MTMTDPIADFLTRLRNANSAYHDEVSLPHSKIKANIAQILKNEGYISDFHTEDARVGKSLIVQLKYGPSRERSIAGLRRVSKPGLRVYAKSTNLPRVLGGLGVAIISTSSGLLTDRQAARQGVGGEVLAYVW.

Belongs to the universal ribosomal protein uS8 family. In terms of assembly, part of the 30S ribosomal subunit. Contacts proteins S5 and S12.

Functionally, one of the primary rRNA binding proteins, it binds directly to 16S rRNA central domain where it helps coordinate assembly of the platform of the 30S subunit. The protein is Small ribosomal subunit protein uS8 of Mycobacterium marinum (strain ATCC BAA-535 / M).